Here is a 117-residue protein sequence, read N- to C-terminus: Minor capsid protein VP2 (117 aa).

This sequence belongs to the lagovirus VP2 protein family. In terms of assembly, homooligomer. The portal-like structure consists in 12 copies of VP2. Interacts with capsid protein VP1.

The protein resides in the virion. It localises to the host cytoplasm. Its function is as follows. Minor structural protein that forms a portal-like structure at a unique three-fold axis of symmetry, following binding to the host receptor. The channel formed by VP2 may allow the delivery of the viral genome through the host endosomal membrane. This Oryctolagus cuniculus (Rabbit) protein is Minor capsid protein VP2.